Here is a 515-residue protein sequence, read N- to C-terminus: Cytoplasmic dynein 1 light intermediate chain 1 (515 aa).

A compositionally biased stretch (low complexity) spans 1–24 (MAAVGRAGSFGSSSASGAANNASA). The tract at residues 1–34 (MAAVGRAGSFGSSSASGAANNASAELRAGGEEDD) is disordered. Residue 64–71 (GEDGAGKT) coordinates ATP. Disordered stretches follow at residues 370 to 424 (QSQL…DPNM) and 445 to 515 (KTGS…GEAS). The segment covering 397–409 (RTPNRSVTSNVAS) has biased composition (polar residues). Over residues 448–468 (SPGGPGGVGGSPGGGSAGGTG) the composition is skewed to gly residues. Basic and acidic residues predominate over residues 490–499 (ELDRISRKPE). Over residues 502 to 515 (SPTSPTSPTEGEAS) the composition is skewed to polar residues.

The protein belongs to the dynein light intermediate chain family. Homodimer. The cytoplasmic dynein 1 complex consists of two catalytic heavy chains (HCs) and a number of non-catalytic subunits presented by intermediate chains (ICs). In terms of processing, phosphorylated.

It is found in the cytoplasm. It localises to the cytoskeleton. The protein localises to the chromosome. The protein resides in the centromere. Its subcellular location is the kinetochore. It is found in the spindle pole. It localises to the recycling endosome membrane. In terms of biological role, acts as one of several non-catalytic accessory components of the cytoplasmic dynein 1 complex that are thought to be involved in linking dynein to cargos and to adapter proteins that regulate dynein function. Cytoplasmic dynein 1 acts as a motor for the intracellular retrograde motility of vesicles and organelles along microtubules. May play a role in binding dynein to membranous organelles or chromosomes. May regulate the movement of peripheral sorting endosomes along microtubule tracks toward the microtubule organizing center/centrosome, generating the endosomal recycling compartment. This Gallus gallus (Chicken) protein is Cytoplasmic dynein 1 light intermediate chain 1 (DYNC1LI1).